A 973-amino-acid chain; its full sequence is GATOR2 complex protein WDR59 (973 aa).

6 WD repeats span residues 57–98 (QSKW…GEVC), 103–143 (GHTR…KPTV), 146–185 (SAVA…TAVE), 189–229 (AHLS…KYLN), 232–276 (PCQV…TPVH), and 280–324 (GHDD…QRLC). Positions 346–365 (DKALQPQDSEPQHSSGHGDE) are disordered. The span at 351–360 (PQDSEPQHSS) shows a compositional bias: polar residues. One can recognise an RWD domain in the interval 393 to 494 (QEFSLINVQI…RQLVSWLESV (102 aa)). A C4-type zinc finger spans residues 900–920 (YCSHCRSEARGTQCAICKGFT). Cysteine 901, cysteine 904, cysteine 913, cysteine 916, cysteine 926, cysteine 937, histidine 942, histidine 945, histidine 948, cysteine 959, cysteine 963, cysteine 965, and cysteine 967 together coordinate Zn(2+). An RING-type; atypical zinc finger spans residues 921–970 (FQCAICHVAVRGSSNFCLTCGHGGHTSHMMEWFRTQEVCPTGCGCHCLLE).

It belongs to the WD repeat WDR59 family. In terms of assembly, component of the GATOR2 subcomplex, composed of MIOS, SEC13, SEH1L, WDR24 and WDR59. The GATOR2 complex interacts with CASTOR1 and CASTOR2; the interaction is negatively regulated by arginine. The GATOR2 complex interacts with SESN1, SESN2 and SESN3; the interaction is negatively regulated by amino acids. Interacts with DDB1-CUL4A/B E3 ligase complexes.

Its subcellular location is the lysosome membrane. The GATOR2 complex is negatively regulated by the upstream amino acid sensors CASTOR1 and SESN2, which sequester the GATOR2 complex in absence of amino acids. In the presence of abundant amino acids, GATOR2 is released from CASTOR1 and SESN2 and activated. Functionally, as a component of the GATOR2 complex, functions as an activator of the amino acid-sensing branch of the mTORC1 signaling pathway. The GATOR2 complex indirectly activates mTORC1 through the inhibition of the GATOR1 subcomplex. GATOR2 probably acts as an E3 ubiquitin-protein ligase toward GATOR1. In the presence of abundant amino acids, the GATOR2 complex mediates ubiquitination of the NPRL2 core component of the GATOR1 complex, leading to GATOR1 inactivation. In the absence of amino acids, GATOR2 is inhibited, activating the GATOR1 complex. The protein is GATOR2 complex protein WDR59 of Gallus gallus (Chicken).